The chain runs to 270 residues: METVLEQLAGLESFPSPYFDEDDFFTDHSSRDALDADDFLEDDVDFLAGQIQDYYRDSRVLHTDDDYCDAGNFSFSSSSSGGFPYECGDGGCDLSPGMKGGSLVMKRRRRLRSDAEMQQLRQAANVRERRRMQSINDAFEGLRSHIPTLPYEKRLSKVDTLRLAIGYINFLSEMVQSDLPLRNPNSDSGNQPKKVIICHRGTRSPSPSDPDYGLPPLAGHSLSWTDEKQLRDQNVVRTAKVWTPEDPRKLNKSPFSNIENEPPLTLCLDM.

A bHLH domain is found at 119 to 171; it reads QLRQAANVRERRRMQSINDAFEGLRSHIPTLPYEKRLSKVDTLRLAIGYINFL.

The protein localises to the nucleus. Its function is as follows. Transcription factor implicated in the cell fate determination in various organs. Binds to the E-box consensus sequence 5'-CANNTG-3'. Acts together with pdx1 to induce the pancreatic lineage within the endoderm. Plays a central role in directing the differentiation of retinal progenitors towards horizontal and amacrine fates. The sequence is that of Pancreas transcription factor 1 subunit alpha (ptf1a) from Xenopus laevis (African clawed frog).